The sequence spans 1164 residues: DNA-directed RNA polymerase subunit beta (1164 aa).

Disordered stretches follow at residues Arg-975 to Asn-994 and Ala-1143 to Ser-1164. 2 stretches are compositionally biased toward basic and acidic residues: residues Arg-981–Gly-991 and Ser-1152–Ser-1164.

The protein belongs to the RNA polymerase beta chain family. In terms of assembly, the RNAP catalytic core consists of 2 alpha, 1 beta, 1 beta' and 1 omega subunit. When a sigma factor is associated with the core the holoenzyme is formed, which can initiate transcription.

The catalysed reaction is RNA(n) + a ribonucleoside 5'-triphosphate = RNA(n+1) + diphosphate. Functionally, DNA-dependent RNA polymerase catalyzes the transcription of DNA into RNA using the four ribonucleoside triphosphates as substrates. In Corynebacterium jeikeium (strain K411), this protein is DNA-directed RNA polymerase subunit beta.